We begin with the raw amino-acid sequence, 375 residues long: UDP-4-amino-4,6-dideoxy-N-acetyl-beta-L-altrosamine transaminase (375 aa).

Residues Y6, 26 to 29, A56, and S178 contribute to the substrate site; that span reads KQLT. Residue K183 is modified to N6-(pyridoxal phosphate)lysine. Residues N228 and 313–316 contribute to the substrate site; that span reads QVHY.

This sequence belongs to the DegT/DnrJ/EryC1 family.

The enzyme catalyses UDP-4-amino-4,6-dideoxy-N-acetyl-beta-L-altrosamine + 2-oxoglutarate = UDP-2-acetamido-2,6-dideoxy-beta-L-arabino-hex-4-ulose + L-glutamate. Functionally, catalyzes the second step in the biosynthesis of pseudaminic acid, a sialic-acid-like sugar that is used to modify flagellin. Uses UDP-2-acetamido-2,6-dideoxy-beta-L-arabino-4-hexulose as substrate producing UDP-4-amino-4,6-dideoxy-beta-L-AltNAc. This is UDP-4-amino-4,6-dideoxy-N-acetyl-beta-L-altrosamine transaminase (pseC) from Helicobacter pylori (strain ATCC 700392 / 26695) (Campylobacter pylori).